A 276-amino-acid polypeptide reads, in one-letter code: Type II pantothenate kinase (276 aa).

8–15 provides a ligand contact to ATP; sequence DAGGTLTK. Glutamate 76 (proton acceptor) is an active-site residue. ATP-binding positions include threonine 105, 127 to 131, phenylalanine 143, and serine 230; that span reads GGTIM.

This sequence belongs to the type II pantothenate kinase family. As to quaternary structure, homodimer.

The protein localises to the cytoplasm. It carries out the reaction (R)-pantothenate + ATP = (R)-4'-phosphopantothenate + ADP + H(+). It functions in the pathway cofactor biosynthesis; coenzyme A biosynthesis; CoA from (R)-pantothenate: step 1/5. Catalyzes the phosphorylation of pantothenate (Pan), the first step in CoA biosynthesis. In Bacillus thuringiensis subsp. konkukian (strain 97-27), this protein is Type II pantothenate kinase.